The sequence spans 147 residues: Myoglobin (147 aa).

Residues 2 to 141 form the Globin domain; that stretch reads ADFDAVLKCW…IIADLEANYK (140 aa). Histidine 60 contributes to the nitrite binding site. Histidine 60 provides a ligand contact to O2. Histidine 89 is a heme b binding site.

It belongs to the globin family. In terms of assembly, monomeric.

Its subcellular location is the cytoplasm. The protein localises to the sarcoplasm. It carries out the reaction Fe(III)-heme b-[protein] + nitric oxide + H2O = Fe(II)-heme b-[protein] + nitrite + 2 H(+). The enzyme catalyses H2O2 + AH2 = A + 2 H2O. Its function is as follows. Monomeric heme protein which primary function is to store oxygen and facilitate its diffusion within muscle tissues. Reversibly binds oxygen through a pentacoordinated heme iron and enables its timely and efficient release as needed during periods of heightened demand. Depending on the oxidative conditions of tissues and cells, and in addition to its ability to bind oxygen, it also has a nitrite reductase activity whereby it regulates the production of bioactive nitric oxide. Under stress conditions, like hypoxia and anoxia, it also protects cells against reactive oxygen species thanks to its pseudoperoxidase activity. In Thunnus obesus (Bigeye tuna), this protein is Myoglobin (mb).